Reading from the N-terminus, the 76-residue chain is Large ribosomal subunit protein uL30 (76 aa).

This sequence belongs to the universal ribosomal protein uL30 family. As to quaternary structure, part of the 50S ribosomal subunit.

In Anaeromyxobacter dehalogenans (strain 2CP-1 / ATCC BAA-258), this protein is Large ribosomal subunit protein uL30.